A 758-amino-acid chain; its full sequence is MTKIRVHEYAKQVNKTSKEVIEALSKLNVSVTNHMSMLEKDIVSKLNQTFKATPEKNVGKQATQNISQKSQSNGQQNHSVKKQEGQRQQSATSKPKVNNQQHSNSSNEKSKNTKGNQNRNMTQNNNNNNNNNNNNRRGGGGYNQRPKPGIHGGKRRHPKTHQPSIPVKQKELPEKITFVESLSVAELAKKLHREPSEIIKKLFMLGVMATINQELDKDAIELICADYGVEVEEEIRVDITDLETHFEQTEEVNEAQLSERPPVVTIMGHVDHGKTTLLDSIRNTKVTAGEAGGITQHIGAYQVTEGDKKITFLDTPGHAAFTTMRARGAKVTDLTILVVAADDGVMPQTVEAINHAKAAEVPIIVAVNKMDKPSANPDRVMQELTEHGLVPEAWGGETIFVPISALKGEGIDTLLEMILLVAEVGELKANPDRLALGTVIEAQLDKGRGSVATLLVQDGTLKVGDPIVVGHTFGRVRAMVNDKGRRVKEAGPSTPVEITGLNDVPQAGDRFVVFEDEKTARQVGETRAMSAIQAQRSEKQRVTLDNLFEQMSQGEMKELNLIVKADVQGTVEAMAASLMKIDVEGVNVKIIHTGAGAITESDISLAAASNAIVIGFNVRPDVNAKRAAEEEGVDIRLHRIIYKVIEEIEQAMKGMLDPEFEEKIIGQAEVRQTIKVSKVGTIAGSYVTEGKVTRDSGVRVIRDNVVIFEGELDTLKRFKDEVKEVARGYECGITITNFNDIKEGDIIEAYIMEEVKRV.

Residues E55–K168 form a disordered region. Polar residues-rich tracts occupy residues K60–H78 and Q86–P95. The segment covering K96–R136 has biased composition (low complexity). One can recognise a tr-type G domain in the interval E259–K428. A G1 region spans residues G268 to T275. Position 268 to 275 (G268 to T275) interacts with GTP. A G2 region spans residues G293 to H297. The interval D314–G317 is G3. Residues D314 to H318 and N368 to D371 each bind GTP. The tract at residues N368 to D371 is G4. The segment at S404 to L406 is G5.

The protein belongs to the TRAFAC class translation factor GTPase superfamily. Classic translation factor GTPase family. IF-2 subfamily.

It is found in the cytoplasm. Functionally, one of the essential components for the initiation of protein synthesis. Protects formylmethionyl-tRNA from spontaneous hydrolysis and promotes its binding to the 30S ribosomal subunits. Also involved in the hydrolysis of GTP during the formation of the 70S ribosomal complex. The protein is Translation initiation factor IF-2 of Lysinibacillus sphaericus (strain C3-41).